Here is a 286-residue protein sequence, read N- to C-terminus: 4-hydroxybenzoate octaprenyltransferase (286 aa).

7 helical membrane passes run 21-40 (GTLL…AGGM), 96-116 (LFVI…GLVV), 142-162 (FLGV…TGEV), 167-187 (WWLF…YAMV), 210-230 (QIIG…GWSA), 235-255 (LYGL…MLIF), and 266-286 (FLNN…DYLF).

The protein belongs to the UbiA prenyltransferase family. Mg(2+) serves as cofactor.

The protein resides in the cell inner membrane. The catalysed reaction is all-trans-octaprenyl diphosphate + 4-hydroxybenzoate = 4-hydroxy-3-(all-trans-octaprenyl)benzoate + diphosphate. It participates in cofactor biosynthesis; ubiquinone biosynthesis. In terms of biological role, catalyzes the prenylation of para-hydroxybenzoate (PHB) with an all-trans polyprenyl group. Mediates the second step in the final reaction sequence of ubiquinone-8 (UQ-8) biosynthesis, which is the condensation of the polyisoprenoid side chain with PHB, generating the first membrane-bound Q intermediate 3-octaprenyl-4-hydroxybenzoate. This chain is 4-hydroxybenzoate octaprenyltransferase, found in Shewanella sp. (strain ANA-3).